The following is a 391-amino-acid chain: Elongation factor Tu 1 (391 aa).

Residues 10–201 (KPHVNIGTIG…EVDNYIPTPE (192 aa)) enclose the tr-type G domain. The tract at residues 19-26 (GHVDHGKT) is G1. 19-26 (GHVDHGKT) contributes to the GTP binding site. Thr-26 is a binding site for Mg(2+). Residues 55 to 59 (GITIS) form a G2 region. The interval 76 to 79 (DCPG) is G3. Residues 76–80 (DCPGH) and 131–134 (NKVD) each bind GTP. Residues 131–134 (NKVD) form a G4 region. The interval 169-171 (SAL) is G5.

This sequence belongs to the TRAFAC class translation factor GTPase superfamily. Classic translation factor GTPase family. EF-Tu/EF-1A subfamily. Monomer.

It localises to the cytoplasm. The catalysed reaction is GTP + H2O = GDP + phosphate + H(+). In terms of biological role, GTP hydrolase that promotes the GTP-dependent binding of aminoacyl-tRNA to the A-site of ribosomes during protein biosynthesis. This Bartonella quintana (strain Toulouse) (Rochalimaea quintana) protein is Elongation factor Tu 1.